The sequence spans 108 residues: Large ribosomal subunit protein uL23 (108 aa).

Belongs to the universal ribosomal protein uL23 family. In terms of assembly, part of the 50S ribosomal subunit. Contacts protein L29, and trigger factor when it is bound to the ribosome.

Its function is as follows. One of the early assembly proteins it binds 23S rRNA. One of the proteins that surrounds the polypeptide exit tunnel on the outside of the ribosome. Forms the main docking site for trigger factor binding to the ribosome. This is Large ribosomal subunit protein uL23 from Polaromonas sp. (strain JS666 / ATCC BAA-500).